The sequence spans 254 residues: 3-deoxy-manno-octulosonate cytidylyltransferase (254 aa).

It belongs to the KdsB family.

It is found in the cytoplasm. The catalysed reaction is 3-deoxy-alpha-D-manno-oct-2-ulosonate + CTP = CMP-3-deoxy-beta-D-manno-octulosonate + diphosphate. It participates in nucleotide-sugar biosynthesis; CMP-3-deoxy-D-manno-octulosonate biosynthesis; CMP-3-deoxy-D-manno-octulosonate from 3-deoxy-D-manno-octulosonate and CTP: step 1/1. Its pathway is bacterial outer membrane biogenesis; lipopolysaccharide biosynthesis. In terms of biological role, activates KDO (a required 8-carbon sugar) for incorporation into bacterial lipopolysaccharide in Gram-negative bacteria. This chain is 3-deoxy-manno-octulosonate cytidylyltransferase, found in Chlamydia pneumoniae (Chlamydophila pneumoniae).